A 195-amino-acid chain; its full sequence is Probable WRKY transcription factor 56 (195 aa).

Residues 1–10 (MEGVDNTNPM) are compositionally biased toward polar residues. Disordered stretches follow at residues 1–20 (MEGVDNTNPMLTLEEGENNN) and 70–93 (EMGGLVSNNSNNSDHNKNCNKGKG). A DNA-binding region (WRKY) is located at residues 108-173 (SDDDVLDDGY…YEGVHNHPCE (66 aa)).

The protein belongs to the WRKY group II-c family.

It is found in the nucleus. In terms of biological role, transcription factor. Interacts specifically with the W box (5'-(T)TGAC[CT]-3'), a frequently occurring elicitor-responsive cis-acting element. The protein is Probable WRKY transcription factor 56 (WRKY56) of Arabidopsis thaliana (Mouse-ear cress).